A 558-amino-acid chain; its full sequence is DNA ligase B (558 aa).

The N6-AMP-lysine intermediate role is filled by K126.

It belongs to the NAD-dependent DNA ligase family. LigB subfamily.

The enzyme catalyses NAD(+) + (deoxyribonucleotide)n-3'-hydroxyl + 5'-phospho-(deoxyribonucleotide)m = (deoxyribonucleotide)n+m + AMP + beta-nicotinamide D-nucleotide.. In terms of biological role, catalyzes the formation of phosphodiester linkages between 5'-phosphoryl and 3'-hydroxyl groups in double-stranded DNA using NAD as a coenzyme and as the energy source for the reaction. This is DNA ligase B from Pseudomonas fluorescens (strain Pf0-1).